The following is a 362-amino-acid chain: 3-isopropylmalate dehydrogenase (362 aa).

78–91 lines the NAD(+) pocket; that stretch reads GYKWDSLPPHQRPE. Positions 98, 108, 136, and 226 each coordinate substrate. 3 residues coordinate Mg(2+): aspartate 226, aspartate 250, and aspartate 254. Residue 284–296 participates in NAD(+) binding; that stretch reads GSAPDIAGQDKAN.

This sequence belongs to the isocitrate and isopropylmalate dehydrogenases family. LeuB type 1 subfamily. In terms of assembly, homodimer. Requires Mg(2+) as cofactor. The cofactor is Mn(2+).

It localises to the cytoplasm. It carries out the reaction (2R,3S)-3-isopropylmalate + NAD(+) = 4-methyl-2-oxopentanoate + CO2 + NADH. It functions in the pathway amino-acid biosynthesis; L-leucine biosynthesis; L-leucine from 3-methyl-2-oxobutanoate: step 3/4. Functionally, catalyzes the oxidation of 3-carboxy-2-hydroxy-4-methylpentanoate (3-isopropylmalate) to 3-carboxy-4-methyl-2-oxopentanoate. The product decarboxylates to 4-methyl-2 oxopentanoate. This Nostoc sp. (strain PCC 7120 / SAG 25.82 / UTEX 2576) protein is 3-isopropylmalate dehydrogenase.